Consider the following 410-residue polypeptide: Arginine deiminase (410 aa).

The Amidino-cysteine intermediate role is filled by cysteine 399.

It belongs to the arginine deiminase family.

Its subcellular location is the cytoplasm. The catalysed reaction is L-arginine + H2O = L-citrulline + NH4(+). It functions in the pathway amino-acid degradation; L-arginine degradation via ADI pathway; carbamoyl phosphate from L-arginine: step 1/2. The polypeptide is Arginine deiminase (Treponema denticola (strain ATCC 35405 / DSM 14222 / CIP 103919 / JCM 8153 / KCTC 15104)).